Here is a 359-residue protein sequence, read N- to C-terminus: Cinnamyl alcohol dehydrogenase 8 (359 aa).

Residue Cys-46 participates in Zn(2+) binding. Ser-48 is an NADP(+) binding site. 7 residues coordinate Zn(2+): His-68, Glu-69, Cys-99, Cys-102, Cys-105, Cys-113, and Cys-162. NADP(+) contacts are provided by residues Thr-166, Gly-187–Gly-192, Ser-210–Lys-215, Thr-250, Gly-274, and Ser-297–Ile-299.

Belongs to the zinc-containing alcohol dehydrogenase family. Homodimer. Requires Zn(2+) as cofactor. Expressed in the differentiation and elongation zones of primary and lateral roots. Expressed in the hypocotyl, cotyledon veins, vasculature of the first rosette leaves, hydathodes and trichomes. In stems, expressed in the vascular cambium and developing xylem tissues. Expressed in the style, anthers, stamen filaments, stigmatic regions in flowers, and abscission and style regions of siliques.

It carries out the reaction (E)-cinnamyl alcohol + NADP(+) = (E)-cinnamaldehyde + NADPH + H(+). It functions in the pathway aromatic compound metabolism; phenylpropanoid biosynthesis. Involved in lignin biosynthesis. Catalyzes the final step specific for the production of lignin monomers. Catalyzes the NADPH-dependent reduction of coniferaldehyde, 5-hydroxyconiferaldehyde, sinapaldehyde, 4-coumaraldehyde and caffeyl aldehyde to their respective alcohols. This is Cinnamyl alcohol dehydrogenase 8 (CAD8) from Arabidopsis thaliana (Mouse-ear cress).